The sequence spans 383 residues: tRNA-specific 2-thiouridylase MnmA (383 aa).

ATP contacts are provided by residues 30 to 37 and M56; that span reads GMSGGVDS. The interval 116–118 is interaction with target base in tRNA; that stretch reads NPD. The active-site Nucleophile is the C121. Cysteines 121 and 218 form a disulfide. An ATP-binding site is contributed by G146. The interaction with tRNA stretch occupies residues 168–170; that stretch reads KDQ. Residue C218 is the Cysteine persulfide intermediate of the active site. The tract at residues 330-331 is interaction with tRNA; the sequence is RY.

Belongs to the MnmA/TRMU family.

It localises to the cytoplasm. The catalysed reaction is S-sulfanyl-L-cysteinyl-[protein] + uridine(34) in tRNA + AH2 + ATP = 2-thiouridine(34) in tRNA + L-cysteinyl-[protein] + A + AMP + diphosphate + H(+). Functionally, catalyzes the 2-thiolation of uridine at the wobble position (U34) of tRNA, leading to the formation of s(2)U34. The sequence is that of tRNA-specific 2-thiouridylase MnmA from Haemophilus influenzae (strain 86-028NP).